A 180-amino-acid polypeptide reads, in one-letter code: NADH-quinone oxidoreductase subunit I (180 aa).

2 consecutive 4Fe-4S ferredoxin-type domains span residues 48 to 80 (IVLT…LQKA) and 90 to 119 (EFFR…LTPD). [4Fe-4S] cluster contacts are provided by C60, C63, C66, C70, C99, C102, C105, and C109. A disordered region spans residues 160–180 (GKPKGSAQKEAAPIDVKSILP).

The protein belongs to the complex I 23 kDa subunit family. NDH-1 is composed of 14 different subunits. Subunits NuoA, H, J, K, L, M, N constitute the membrane sector of the complex. It depends on [4Fe-4S] cluster as a cofactor.

It is found in the cell inner membrane. It carries out the reaction a quinone + NADH + 5 H(+)(in) = a quinol + NAD(+) + 4 H(+)(out). Functionally, NDH-1 shuttles electrons from NADH, via FMN and iron-sulfur (Fe-S) centers, to quinones in the respiratory chain. The immediate electron acceptor for the enzyme in this species is believed to be ubiquinone. Couples the redox reaction to proton translocation (for every two electrons transferred, four hydrogen ions are translocated across the cytoplasmic membrane), and thus conserves the redox energy in a proton gradient. In Tolumonas auensis (strain DSM 9187 / NBRC 110442 / TA 4), this protein is NADH-quinone oxidoreductase subunit I.